The sequence spans 428 residues: Beta-1,3-galactosyl-O-glycosyl-glycoprotein beta-1,6-N-acetylglucosaminyltransferase 4 (428 aa).

Residues 1–12 (MRRCAVLHRLRC) lie on the Cytoplasmic side of the membrane. Residues 13–30 (KFYVFVVSLFVVVKLVYL) traverse the membrane as a helical; Signal-anchor for type II membrane protein segment. The Lumenal portion of the chain corresponds to 31 to 428 (KISMDNSIYI…QLQQCLRRVS (398 aa)). An N-linked (GlcNAc...) asparagine glycan is attached at Asn59. 4 cysteine pairs are disulfide-bonded: Cys60–Cys214, Cys148–Cys369, Cys169–Cys196, and Cys378–Cys410.

This sequence belongs to the glycosyltransferase 14 family.

It is found in the golgi apparatus membrane. The catalysed reaction is a 3-O-[beta-D-galactosyl-(1-&gt;3)-N-acetyl-alpha-D-galactosaminyl]-L-seryl-[protein] + UDP-N-acetyl-alpha-D-glucosamine = 3-O-{beta-D-galactosyl-(1-&gt;3)-[N-acetyl-beta-D-glucosaminyl-(1-&gt;6)]-N-acetyl-alpha-D-galactosaminyl}-L-seryl-[protein] + UDP + H(+). The enzyme catalyses a 3-O-[beta-D-galactosyl-(1-&gt;3)-N-acetyl-alpha-D-galactosaminyl]-L-threonyl-[protein] + UDP-N-acetyl-alpha-D-glucosamine = a 3-O-{beta-D-galactosyl-(1-&gt;3)-[N-acetyl-beta-D-glucosaminyl-(1-&gt;6)]-N-acetyl-alpha-D-galactosaminyl}-L-threonyl-[protein] + UDP + H(+). The protein operates within protein modification; protein glycosylation. Glycosyltransferase that mediates core 2 O-glycan branching, an important step in mucin-type biosynthesis. The protein is Beta-1,3-galactosyl-O-glycosyl-glycoprotein beta-1,6-N-acetylglucosaminyltransferase 4 (gcnt4) of Danio rerio (Zebrafish).